Reading from the N-terminus, the 42-residue chain is Crotamine-IV-3 (42 aa).

Intrachain disulfides connect C4/C37, C11/C31, and C19/C38.

The protein belongs to the crotamine-myotoxin family. In terms of assembly, monomer. In terms of tissue distribution, expressed by the venom gland.

The protein resides in the secreted. Its function is as follows. Cationic peptide that possesses multiple functions. It acts as a cell-penetrating peptide (CPP), and as a potent voltage-gated potassium channel (Kv) inhibitor. It exhibits antimicrobial activities, and hind limb paralysis. It also induces potent blockade of neuromuscular transmission in young chicken biventer cervicis preparation and potent myotoxic effect. In mice, it induces myonecrosis, upon intramuscular or subcutaneous injections. In Crotalus durissus cumanensis (South American rattlesnake), this protein is Crotamine-IV-3.